The chain runs to 284 residues: 4-diphosphocytidyl-2-C-methyl-D-erythritol kinase (284 aa).

Lys-14 is an active-site residue. 98–108 contacts ATP; sequence PMGGGLGGGSS. Asp-140 is a catalytic residue.

It belongs to the GHMP kinase family. IspE subfamily.

It catalyses the reaction 4-CDP-2-C-methyl-D-erythritol + ATP = 4-CDP-2-C-methyl-D-erythritol 2-phosphate + ADP + H(+). It functions in the pathway isoprenoid biosynthesis; isopentenyl diphosphate biosynthesis via DXP pathway; isopentenyl diphosphate from 1-deoxy-D-xylulose 5-phosphate: step 3/6. Its function is as follows. Catalyzes the phosphorylation of the position 2 hydroxy group of 4-diphosphocytidyl-2C-methyl-D-erythritol. The chain is 4-diphosphocytidyl-2-C-methyl-D-erythritol kinase from Shewanella baltica (strain OS155 / ATCC BAA-1091).